The primary structure comprises 277 residues: NH(3)-dependent NAD(+) synthetase (277 aa).

Position 36–43 (36–43) interacts with ATP; it reads GLSGGIDS. Mg(2+) is bound at residue Asp42. A deamido-NAD(+)-binding site is contributed by Arg118. Residue Thr138 coordinates ATP. Glu143 provides a ligand contact to Mg(2+). Residues Lys167 and Ser189 each coordinate ATP.

Belongs to the NAD synthetase family. In terms of assembly, homodimer.

The enzyme catalyses deamido-NAD(+) + NH4(+) + ATP = AMP + diphosphate + NAD(+) + H(+). It functions in the pathway cofactor biosynthesis; NAD(+) biosynthesis; NAD(+) from deamido-NAD(+) (ammonia route): step 1/1. Functionally, catalyzes the ATP-dependent amidation of deamido-NAD to form NAD. Uses ammonia as a nitrogen source. The protein is NH(3)-dependent NAD(+) synthetase of Pelodictyon phaeoclathratiforme (strain DSM 5477 / BU-1).